A 635-amino-acid chain; its full sequence is Replication factor C small subunit (635 aa).

51–58 provides a ligand contact to ATP; it reads GPPGTGKT.

It belongs to the activator 1 small subunits family. RfcS subfamily. As to quaternary structure, heteromultimer composed of small subunits (RfcS) and large subunits (RfcL). Post-translationally, this protein undergoes a protein self splicing that involves a post-translational excision of the intervening region (intein) followed by peptide ligation.

Its function is as follows. Part of the RFC clamp loader complex which loads the PCNA sliding clamp onto DNA. The chain is Replication factor C small subunit (rfcS) from Methanopyrus kandleri (strain AV19 / DSM 6324 / JCM 9639 / NBRC 100938).